We begin with the raw amino-acid sequence, 434 residues long: RNA polymerase II holoenzyme cyclin-like subunit (434 aa).

The Cyclin N-terminal domain occupies E23 to L155. A compositionally biased stretch (low complexity) spans G248–T278. 3 disordered regions span residues G248 to E292, L301 to N320, and Q330 to S362. The segment covering Q330 to G359 has biased composition (low complexity).

This sequence belongs to the cyclin family. Cyclin C subfamily. Component of the SRB8-11 complex, a regulatory module of the Mediator complex.

The protein localises to the nucleus. In terms of biological role, component of the SRB8-11 complex. The SRB8-11 complex is a regulatory module of the Mediator complex which is itself involved in regulation of basal and activated RNA polymerase II-dependent transcription. The SRB8-11 complex may be involved in the transcriptional repression of a subset of genes regulated by Mediator. It may inhibit the association of the Mediator complex with RNA polymerase II to form the holoenzyme complex. The SRB8-11 complex phosphorylates the C-terminal domain (CTD) of the largest subunit of RNA polymerase II. The chain is RNA polymerase II holoenzyme cyclin-like subunit (SSN8) from Candida albicans (strain SC5314 / ATCC MYA-2876) (Yeast).